We begin with the raw amino-acid sequence, 208 residues long: N-(5'-phosphoribosyl)anthranilate isomerase (208 aa).

This sequence belongs to the TrpF family.

It carries out the reaction N-(5-phospho-beta-D-ribosyl)anthranilate = 1-(2-carboxyphenylamino)-1-deoxy-D-ribulose 5-phosphate. The protein operates within amino-acid biosynthesis; L-tryptophan biosynthesis; L-tryptophan from chorismate: step 3/5. The protein is N-(5'-phosphoribosyl)anthranilate isomerase of Nitrosomonas eutropha (strain DSM 101675 / C91 / Nm57).